Reading from the N-terminus, the 223-residue chain is MGSNKIKNLVQYEIQDFVSLNKMDTKSHDSLNLNVSKKSRYLLHRVLTNQLINNRSGNACTKTRSEVEGGGKKPWKQKGTGNARAGSSNSPLWKGGGVTFGPKPRTFSNKTNKKERLLALTTALYLKSNNTKVINLDNLDFTNLKTRDLVIKCSNLIENYKKDQKILFVAEPTASGLWRYVKNISNVDLIYTTGLDLKKILQAHHIIFTCKALNDVKEVFNEQ.

A disordered region spans residues T61–G96.

It belongs to the universal ribosomal protein uL4 family. As to quaternary structure, part of the 50S ribosomal subunit.

It localises to the plastid. It is found in the chloroplast. In terms of biological role, probably binds the 23S rRNA. The chain is Large ribosomal subunit protein uL4c (rpl4) from Guillardia theta (Cryptophyte).